A 364-amino-acid polypeptide reads, in one-letter code: Histidinol-phosphate aminotransferase 2 (364 aa).

At lysine 223 the chain carries N6-(pyridoxal phosphate)lysine.

Belongs to the class-II pyridoxal-phosphate-dependent aminotransferase family. Histidinol-phosphate aminotransferase subfamily. As to quaternary structure, homodimer. Pyridoxal 5'-phosphate is required as a cofactor.

It catalyses the reaction L-histidinol phosphate + 2-oxoglutarate = 3-(imidazol-4-yl)-2-oxopropyl phosphate + L-glutamate. The protein operates within amino-acid biosynthesis; L-histidine biosynthesis; L-histidine from 5-phospho-alpha-D-ribose 1-diphosphate: step 7/9. This Oceanobacillus iheyensis (strain DSM 14371 / CIP 107618 / JCM 11309 / KCTC 3954 / HTE831) protein is Histidinol-phosphate aminotransferase 2 (hisC2).